The sequence spans 145 residues: Ribonuclease H (145 aa).

The 142-residue stretch at 2–143 folds into the RNase H type-1 domain; it reads SKKEVIIYTD…ADSLARKAII (142 aa). D11, E49, D71, and D135 together coordinate Mg(2+).

Belongs to the RNase H family. Monomer. Mg(2+) is required as a cofactor.

The protein localises to the cytoplasm. The catalysed reaction is Endonucleolytic cleavage to 5'-phosphomonoester.. Its function is as follows. Endonuclease that specifically degrades the RNA of RNA-DNA hybrids. The chain is Ribonuclease H from Wolbachia pipientis wMel.